A 261-amino-acid polypeptide reads, in one-letter code: ATP synthase subunit a (261 aa).

6 consecutive transmembrane segments (helical) span residues 45–65 (ITNVTMWMAIAVLVIAAILVL), 107–127 (VMTLFLFVLCGNVLGLLPLSF), 133–153 (MAVTVPLALMVFVGVTALGFM), 162–182 (MFWVTSAPLAIRPVLAVIEVI), 209–229 (IAGFASIAVVSPVVVGAVTAI), and 232–252 (LELLVAVVQAYVFTILTCVYL).

Belongs to the ATPase A chain family. F-type ATPases have 2 components, CF(1) - the catalytic core - and CF(0) - the membrane proton channel. CF(1) has five subunits: alpha(3), beta(3), gamma(1), delta(1), epsilon(1). CF(0) has four main subunits: a, b, b' and c.

The protein resides in the cell inner membrane. Functionally, key component of the proton channel; it plays a direct role in the translocation of protons across the membrane. The protein is ATP synthase subunit a of Cereibacter sphaeroides (strain ATCC 17025 / ATH 2.4.3) (Rhodobacter sphaeroides).